Here is a 201-residue protein sequence, read N- to C-terminus: Putative lipoprotein LppC (201 aa).

Residues 1 to 23 form the signal peptide; sequence MTSTLHRTPLATAGLALVVALGG. Cys24 carries N-palmitoyl cysteine lipidation. Cys24 is lipidated: S-diacylglycerol cysteine. Prevents bacterial uptake by a human macrophage-like cell line regions lie at residues 77-96, 97-116, and 117-136; these read GANV…AELA, LVVD…IVTG, and IAPG…GHSV. The disordered stretch occupies residues 122–141; that stretch reads GSTADGQTPAGGHSVPNSGG.

Belongs to the UPF0098 family.

The protein localises to the cell membrane. It is found in the cell surface. Functionally, probably involved in bacterial recognition and uptake by its host (human). The chain is Putative lipoprotein LppC from Mycobacterium tuberculosis (strain ATCC 25618 / H37Rv).